The chain runs to 159 residues: Ribosomal RNA large subunit methyltransferase H (159 aa).

Residues glycine 108 and 127–132 (FGKLTM) contribute to the S-adenosyl-L-methionine site.

It belongs to the RNA methyltransferase RlmH family. As to quaternary structure, homodimer.

Its subcellular location is the cytoplasm. The enzyme catalyses pseudouridine(1915) in 23S rRNA + S-adenosyl-L-methionine = N(3)-methylpseudouridine(1915) in 23S rRNA + S-adenosyl-L-homocysteine + H(+). Its function is as follows. Specifically methylates the pseudouridine at position 1915 (m3Psi1915) in 23S rRNA. In Lactobacillus acidophilus (strain ATCC 700396 / NCK56 / N2 / NCFM), this protein is Ribosomal RNA large subunit methyltransferase H.